A 130-amino-acid chain; its full sequence is Large ribosomal subunit protein uL14 (130 aa).

The protein belongs to the universal ribosomal protein uL14 family. In terms of assembly, part of the 50S ribosomal subunit. Forms a cluster with proteins L3 and L19. In the 70S ribosome, L14 and L19 interact and together make contacts with the 16S rRNA in bridges B5 and B8.

Functionally, binds to 23S rRNA. Forms part of two intersubunit bridges in the 70S ribosome. The sequence is that of Large ribosomal subunit protein uL14 from Leptospira biflexa serovar Patoc (strain Patoc 1 / Ames).